Here is a 302-residue protein sequence, read N- to C-terminus: Nucleotide-binding protein SE_0548 (302 aa).

Residue 18 to 25 (GMSGAGKS) coordinates ATP. Residue 69-72 (DLRG) coordinates GTP.

It belongs to the RapZ-like family.

In terms of biological role, displays ATPase and GTPase activities. This chain is Nucleotide-binding protein SE_0548, found in Staphylococcus epidermidis (strain ATCC 12228 / FDA PCI 1200).